The primary structure comprises 247 residues: Chalcone--flavanone isomerase (247 aa).

Substrate contacts are provided by Thr-56, Asn-121, and Ser-198. The span at 223 to 235 (ENKVEEDATKTDQ) shows a compositional bias: basic and acidic residues. The tract at residues 223–247 (ENKVEEDATKTDQEEANDLSLAKEN) is disordered.

It belongs to the chalcone isomerase family.

It carries out the reaction a chalcone = a flavanone.. Its pathway is secondary metabolite biosynthesis; flavonoid biosynthesis. Functionally, catalyzes the intramolecular cyclization of bicyclic chalcones into tricyclic (S)-flavanones. Responsible for the isomerization of 4,2',4',6'-tetrahydroxychalcone (also termed chalcone) into naringenin. This chain is Chalcone--flavanone isomerase (CHI), found in Raphanus sativus (Radish).